We begin with the raw amino-acid sequence, 330 residues long: Glycerol-3-phosphate dehydrogenase [NAD(P)+] (330 aa).

W11, R33, and K105 together coordinate NADPH. Residues K105, G133, and S135 each contribute to the sn-glycerol 3-phosphate site. A137 lines the NADPH pocket. Residues K188, D241, S251, R252, and N253 each coordinate sn-glycerol 3-phosphate. The Proton acceptor role is filled by K188. An NADPH-binding site is contributed by R252. NADPH is bound by residues V276 and E278.

This sequence belongs to the NAD-dependent glycerol-3-phosphate dehydrogenase family.

It is found in the cytoplasm. It catalyses the reaction sn-glycerol 3-phosphate + NAD(+) = dihydroxyacetone phosphate + NADH + H(+). The enzyme catalyses sn-glycerol 3-phosphate + NADP(+) = dihydroxyacetone phosphate + NADPH + H(+). It functions in the pathway membrane lipid metabolism; glycerophospholipid metabolism. Catalyzes the reduction of the glycolytic intermediate dihydroxyacetone phosphate (DHAP) to sn-glycerol 3-phosphate (G3P), the key precursor for phospholipid synthesis. The sequence is that of Glycerol-3-phosphate dehydrogenase [NAD(P)+] from Acidovorax sp. (strain JS42).